The sequence spans 447 residues: MKPVIALVGRPNVGKSTLFNRLTKSRDAIVADFAGLTRDRHYGNGRQGKHEYIVIDTGGFEPDASSGIYREMARQTQQAVAEADVVVFVVDVRGGLSAQDHDIANYLRRLGKPCVLAGNKAEGMQDSMHLAEFYELGLGEVHPVSAAHGQGVRSLVDLALKPLALPEIEEEDAAAEKNVIRLAVAGRPNVGKSTLINTWLGEERLVAFDMPGTTRDAISVPFERNGQKFELIDTAGLRRKGKVFEAIEKFSVVKTLQAIESANVVLLLLDATQGVTDQDAHIAGYILESGRAVVIAVNKWDAVDDYGRQQLERSIETRLSFLKFAPLHFISAKKRQGIGPLWSSIIQAYKSANRKMPTPVLTRLLQEAVQFQSPKRSGMFRPKMRYAHQGGMNPPVIVIHGNSLEHVTDAYKRFLEARFRKEFDLVGTPLRIEMKTSSNPYTDKQNS.

EngA-type G domains lie at 3 to 167 and 180 to 353; these read PVIA…ALPE and IRLA…KSAN. GTP contacts are provided by residues 9-16, 56-60, 119-122, 186-193, 233-237, and 298-301; these read GRPNVGKS, DTGGF, NKAE, DTAGL, and NKWD. Positions 354-438 constitute a KH-like domain; sequence RKMPTPVLTR…PLRIEMKTSS (85 aa).

The protein belongs to the TRAFAC class TrmE-Era-EngA-EngB-Septin-like GTPase superfamily. EngA (Der) GTPase family. Associates with the 50S ribosomal subunit.

Functionally, GTPase that plays an essential role in the late steps of ribosome biogenesis. In Acidovorax ebreus (strain TPSY) (Diaphorobacter sp. (strain TPSY)), this protein is GTPase Der.